The following is a 600-amino-acid chain: MALRRALPALRPCIPRFVPLSTAPASREQPAAGPAAVPGGGSATAVRPPVPAVDFGNAQEAYRSRRTWELARSLLVLRLCAWPALLARHEQLLYVSRKLLGQRLFNKLMKMTFYGHFVAGEDQESIQPLLRHYRAFGVSAILDYGVEEDLSPEEAEHKEMESCTSAAERDGSGTNKRDKQYQAHWAFGDRRNGVISARTYFYANEAKCDSHMETFLRCIEASGRVSDDGFIAIKLTALGRPQFLLQFSEVLAKWRCFFHQMAVEQGQAGLAAMDTKLEVAVLQESVAKLGIASRAEIEDWFTAETLGVSGTMDLLDWSSLIDSRTKLSKHLVVPNAQTGQLEPLLSRFTEEEELQMTRMLQRMDVLAKKATEMGVRLMVDAEQTYFQPAISRLTLEMQRKFNVEKPLIFNTYQCYLKDAYDNVTLDVELARREGWCFGAKLVRGAYLAQERARAAEIGYEDPINPTYEATNAMYHRCLDYVLEELKHNAKAKVMVASHNEDTVRFALRRMEELGLHPADHRVYFGQLLGMCDQISFPLGQAGYPVYKYVPYGPVMEVLPYLSRRALENSSLMKGTHRERQLLWLELLRRLRTGNLFHRPA.

Residues 155–177 (AEHKEMESCTSAAERDGSGTNKR) form a disordered region. An N6-acetyllysine mark is found at Lys368 and Lys486.

It belongs to the proline oxidase family. Requires FAD as cofactor. As to expression, expressed in lung, skeletal muscle and brain, to a lesser extent in heart and kidney, and weakly in liver, placenta and pancreas.

The protein localises to the mitochondrion matrix. It carries out the reaction L-proline + a quinone = (S)-1-pyrroline-5-carboxylate + a quinol + H(+). The protein operates within amino-acid degradation; L-proline degradation into L-glutamate; L-glutamate from L-proline: step 1/2. Converts proline to delta-1-pyrroline-5-carboxylate. The polypeptide is Proline dehydrogenase 1, mitochondrial (Homo sapiens (Human)).